Here is a 327-residue protein sequence, read N- to C-terminus: Clavesin-2 (327 aa).

Positions 96-257 (IKQALKDGFP…EFGGMLPPYD (162 aa)) constitute a CRAL-TRIO domain. The tract at residues 289 to 327 (DKELSPKSMKRSQSVVDPTALKRMDKSEEENMQPLLALD) is disordered.

Forms a complex with clathrin heavy chain and gamma-adaptin.

The protein localises to the golgi apparatus. It localises to the trans-Golgi network membrane. The protein resides in the early endosome membrane. Its subcellular location is the cytoplasmic vesicle. It is found in the clathrin-coated vesicle. Functionally, required for normal morphology of late endosomes and/or lysosomes in neurons. Binds phosphatidylinositol 3,5-bisphosphate (PtdIns(3,5)P2). The sequence is that of Clavesin-2 (Clvs2) from Mus musculus (Mouse).